We begin with the raw amino-acid sequence, 145 residues long: Nucleoside diphosphate kinase (145 aa).

6 residues coordinate ATP: lysine 11, phenylalanine 59, arginine 87, threonine 93, arginine 104, and asparagine 114. Histidine 117 (pros-phosphohistidine intermediate) is an active-site residue.

Belongs to the NDK family. Mg(2+) serves as cofactor.

It localises to the cytoplasm. The catalysed reaction is a 2'-deoxyribonucleoside 5'-diphosphate + ATP = a 2'-deoxyribonucleoside 5'-triphosphate + ADP. The enzyme catalyses a ribonucleoside 5'-diphosphate + ATP = a ribonucleoside 5'-triphosphate + ADP. In terms of biological role, major role in the synthesis of nucleoside triphosphates other than ATP. The ATP gamma phosphate is transferred to the NDP beta phosphate via a ping-pong mechanism, using a phosphorylated active-site intermediate. The protein is Nucleoside diphosphate kinase of Sulfolobus acidocaldarius (strain ATCC 33909 / DSM 639 / JCM 8929 / NBRC 15157 / NCIMB 11770).